A 234-amino-acid chain; its full sequence is ATP synthase subunit delta, chloroplastic (234 aa).

The N-terminal 47 residues, 1-47 (MASLQQTLFSLQSKLPPSSFQIARSLPLRKTFPIRINNGGNAAGARM), are a transit peptide targeting the chloroplast. Serine 48 carries the N-acetylserine modification. N-linked (GlcNAc...) asparagine glycosylation occurs at asparagine 66. Phosphothreonine is present on threonine 234.

This sequence belongs to the ATPase delta chain family. As to quaternary structure, F-type ATPases have 2 components, F(1) - the catalytic core - and F(0) - the membrane proton channel. F(1) has five subunits: alpha(3), beta(3), gamma(1), delta(1), epsilon(1). CF(0) has four main subunits: a(1), b(1), b'(1) and c(10-14). The alpha and beta chains form an alternating ring which encloses part of the gamma chain. F(1) is attached to F(0) by a central stalk formed by the gamma and epsilon chains, while a peripheral stalk is formed by the delta, b and b' chains.

It is found in the plastid. The protein resides in the chloroplast thylakoid membrane. Functionally, f(1)F(0) ATP synthase produces ATP from ADP in the presence of a proton or sodium gradient. F-type ATPases consist of two structural domains, F(1) containing the extramembraneous catalytic core and F(0) containing the membrane proton channel, linked together by a central stalk and a peripheral stalk. During catalysis, ATP synthesis in the catalytic domain of F(1) is coupled via a rotary mechanism of the central stalk subunits to proton translocation (Potential). Essential for photosynthesis, probably by facilitating electron transport in both photosystems I and II. Its function is as follows. This protein is part of the stalk that links CF(0) to CF(1). It either transmits conformational changes from CF(0) to CF(1) or is implicated in proton conduction. This is ATP synthase subunit delta, chloroplastic from Arabidopsis thaliana (Mouse-ear cress).